The primary structure comprises 157 residues: MERIPMTAEGHAALQAELKVLKSVERPSIIAAISEARSHGDLSENAEYHAAKEKQSFIEGRISELDDKLARADVIDVSKLGGSKVRFGATVTIADVDTEDEQTYKIVGEDEADVKQGKISVTSPIARALIGKEEGDEAEVAAPAGARAYEVIKVVYK.

It belongs to the GreA/GreB family.

Functionally, necessary for efficient RNA polymerase transcription elongation past template-encoded arresting sites. The arresting sites in DNA have the property of trapping a certain fraction of elongating RNA polymerases that pass through, resulting in locked ternary complexes. Cleavage of the nascent transcript by cleavage factors such as GreA or GreB allows the resumption of elongation from the new 3'terminus. GreA releases sequences of 2 to 3 nucleotides. The protein is Transcription elongation factor GreA of Hyphomonas neptunium (strain ATCC 15444).